A 143-amino-acid chain; its full sequence is Transcriptional regulator MraZ (143 aa).

2 consecutive SpoVT-AbrB domains span residues 5 to 47 (EYKH…PMHE) and 76 to 119 (ATEC…SSKR).

The protein belongs to the MraZ family. Forms oligomers.

It is found in the cytoplasm. Its subcellular location is the nucleoid. This Halothermothrix orenii (strain H 168 / OCM 544 / DSM 9562) protein is Transcriptional regulator MraZ.